Reading from the N-terminus, the 507-residue chain is ATP synthase subunit alpha, chloroplastic (507 aa).

170–177 (GDRQTGKT) serves as a coordination point for ATP. At threonine 257 the chain carries Phosphothreonine.

It belongs to the ATPase alpha/beta chains family. In terms of assembly, F-type ATPases have 2 components, CF(1) - the catalytic core - and CF(0) - the membrane proton channel. CF(1) has five subunits: alpha(3), beta(3), gamma(1), delta(1), epsilon(1). CF(0) has four main subunits: a, b, b' and c.

It is found in the plastid. The protein localises to the chloroplast thylakoid membrane. It carries out the reaction ATP + H2O + 4 H(+)(in) = ADP + phosphate + 5 H(+)(out). In terms of biological role, produces ATP from ADP in the presence of a proton gradient across the membrane. The alpha chain is a regulatory subunit. The sequence is that of ATP synthase subunit alpha, chloroplastic from Draba nemorosa (Woodland whitlowgrass).